Consider the following 24-residue polypeptide: Brevinin-1Ra (24 aa).

A disulfide bridge connects residues Cys18 and Cys24.

As to expression, expressed by the skin glands.

The protein resides in the secreted. Functionally, antimicrobial peptide. This chain is Brevinin-1Ra, found in Pelophylax ridibundus (Marsh frog).